Consider the following 348-residue polypeptide: Protein RecA (348 aa).

Residue 66–73 participates in ATP binding; it reads GPESSGKT.

It belongs to the RecA family.

It is found in the cytoplasm. Can catalyze the hydrolysis of ATP in the presence of single-stranded DNA, the ATP-dependent uptake of single-stranded DNA by duplex DNA, and the ATP-dependent hybridization of homologous single-stranded DNAs. It interacts with LexA causing its activation and leading to its autocatalytic cleavage. The chain is Protein RecA from Neisseria gonorrhoeae (strain NCCP11945).